We begin with the raw amino-acid sequence, 400 residues long: Exodeoxyribonuclease 7 large subunit (400 aa).

This sequence belongs to the XseA family. As to quaternary structure, heterooligomer composed of large and small subunits.

The protein localises to the cytoplasm. It carries out the reaction Exonucleolytic cleavage in either 5'- to 3'- or 3'- to 5'-direction to yield nucleoside 5'-phosphates.. Functionally, bidirectionally degrades single-stranded DNA into large acid-insoluble oligonucleotides, which are then degraded further into small acid-soluble oligonucleotides. In Clostridium perfringens (strain 13 / Type A), this protein is Exodeoxyribonuclease 7 large subunit.